A 533-amino-acid chain; its full sequence is Lysine--tRNA ligase (533 aa).

A 'HIGH' region motif is present at residues 28-36; sequence PSGHIHIGN. A 'KMSKS' region motif is present at residues 278–282; it reads PMSSS.

This sequence belongs to the class-I aminoacyl-tRNA synthetase family.

It localises to the cytoplasm. The catalysed reaction is tRNA(Lys) + L-lysine + ATP = L-lysyl-tRNA(Lys) + AMP + diphosphate. The chain is Lysine--tRNA ligase (lysS) from Methanococcus maripaludis (strain DSM 14266 / JCM 13030 / NBRC 101832 / S2 / LL).